A 313-amino-acid chain; its full sequence is Protein HEXIM2 (313 aa).

Residues 1 to 13 (MATVNHTNCNTAS) show a composition bias toward polar residues. Positions 1 to 78 (MATVNHTNCN…RGSRTQSPGG (78 aa)) are disordered. 4 positions are modified to phosphoserine: Ser-28, Ser-52, Ser-75, and Ser-80. Positions 64-77 (SSCNIRGSRTQSPG) are enriched in polar residues. 3 disordered regions span residues 111–139 (EKQQ…PLAP), 155–194 (PNLD…DFSE), and 267–313 (QENE…AGDR). Positions 112–131 (KQQRDERQSQRASRVREEMF) are enriched in basic and acidic residues. Positions 139–142 (PYNT) are interaction with P-TEFb. A compositionally biased stretch (basic and acidic residues) spans 179 to 194 (GQGRAHGEFQQRDFSE). Residues 207 to 276 (RSKQELVRDY…QENEMWNREG (70 aa)) are a coiled coil. The tract at residues 225-286 (QAEQETRRLR…GYCDQEKPAS (62 aa)) is interaction with CCNT1, HEXIM1 and HEXIM2.

Belongs to the HEXIM family. As to quaternary structure, homooligomer and heterooligomer with HEXIM1; probably dimeric. Core component of the 7SK RNP complex, at least composed of 7SK RNA, LARP7, MEPCE, HEXIM1 (or HEXIM2) and P-TEFb (composed of CDK9 and CCNT1/cyclin-T1). Interacts with CCNT2.

It localises to the nucleus. Functionally, transcriptional regulator which functions as a general RNA polymerase II transcription inhibitor. Core component of the 7SK RNP complex: in cooperation with 7SK snRNA sequesters P-TEFb in a large inactive 7SK snRNP complex preventing RNA polymerase II phosphorylation and subsequent transcriptional elongation. This Mus musculus (Mouse) protein is Protein HEXIM2 (Hexim2).